A 441-amino-acid chain; its full sequence is Ribosomal protein uS12 methylthiotransferase RimO (441 aa).

Residues 8–118 (PKIGFVSLGC…VLEHVHHYVP (111 aa)) enclose the MTTase N-terminal domain. Residues Cys-17, Cys-53, Cys-82, Cys-150, Cys-154, and Cys-157 each coordinate [4Fe-4S] cluster. The 238-residue stretch at 136-373 (LTPRHYAYLK…MQLQQQISAE (238 aa)) folds into the Radical SAM core domain. The region spanning 376 to 441 (QEKVGREILV…DEYDLWGSRV (66 aa)) is the TRAM domain.

Belongs to the methylthiotransferase family. RimO subfamily. [4Fe-4S] cluster is required as a cofactor.

Its subcellular location is the cytoplasm. The enzyme catalyses L-aspartate(89)-[ribosomal protein uS12]-hydrogen + (sulfur carrier)-SH + AH2 + 2 S-adenosyl-L-methionine = 3-methylsulfanyl-L-aspartate(89)-[ribosomal protein uS12]-hydrogen + (sulfur carrier)-H + 5'-deoxyadenosine + L-methionine + A + S-adenosyl-L-homocysteine + 2 H(+). In terms of biological role, catalyzes the methylthiolation of an aspartic acid residue of ribosomal protein uS12. The polypeptide is Ribosomal protein uS12 methylthiotransferase RimO (Escherichia coli (strain UTI89 / UPEC)).